Consider the following 293-residue polypeptide: Microtubule-associated protein RP/EB family member 1B (293 aa).

In terms of domain architecture, Calponin-homology (CH) spans 13 to 115 (FVGRNEILSW…FLQWLKRFCD (103 aa)). 2 disordered regions span residues 124-188 (ENYN…SAEV) and 262-293 (LGLE…ETQT). A compositionally biased stretch (basic and acidic residues) spans 129-141 (VERRSRGGREKSV). The span at 151-166 (LQTNNMHHPPVATSNK) shows a compositional bias: polar residues. Positions 180-250 (GGSNSSAEVQ…LYATDANESV (71 aa)) constitute an EB1 C-terminal domain. The span at 266-285 (GYEEEGKEEEEEEEEEEEEA) shows a compositional bias: acidic residues.

Belongs to the MAPRE family. Homodimer and heterodimer with EB1A. In terms of tissue distribution, highly expressed in guard cells of leaf stomata, pollen grains and pollen tubes. Expressed in young roots.

The protein resides in the cytoplasm. It localises to the cytoskeleton. Its subcellular location is the spindle pole. The protein localises to the phragmoplast. Binds to the plus end of microtubules and regulates the dynamics of the microtubule cytoskeleton. May be involved in anchoring microtubules to their nucleation sites and/or functioning as a reservoir for distribution to the growing end. In plants, microtubule minus ends are not necessarily severed from the nucleation site and transported to the plus end of a microtubule as part of the recycling process. May play a role in endomembrane organization during polarized growth of plant cells. The polypeptide is Microtubule-associated protein RP/EB family member 1B (EB1B) (Arabidopsis thaliana (Mouse-ear cress)).